Consider the following 442-residue polypeptide: Phosphoglucosamine mutase (442 aa).

Ser103 serves as the catalytic Phosphoserine intermediate. Residues Ser103, Asp241, Asp243, and Asp245 each coordinate Mg(2+). The residue at position 103 (Ser103) is a Phosphoserine.

It belongs to the phosphohexose mutase family. Mg(2+) is required as a cofactor. Activated by phosphorylation.

The catalysed reaction is alpha-D-glucosamine 1-phosphate = D-glucosamine 6-phosphate. In terms of biological role, catalyzes the conversion of glucosamine-6-phosphate to glucosamine-1-phosphate. The polypeptide is Phosphoglucosamine mutase (Deinococcus deserti (strain DSM 17065 / CIP 109153 / LMG 22923 / VCD115)).